Here is a 213-residue protein sequence, read N- to C-terminus: FMN-dependent NADH:quinone oxidoreductase (213 aa).

An FMN-binding site is contributed by Ser10.

Belongs to the azoreductase type 1 family. Homodimer. It depends on FMN as a cofactor.

The catalysed reaction is 2 a quinone + NADH + H(+) = 2 a 1,4-benzosemiquinone + NAD(+). It carries out the reaction N,N-dimethyl-1,4-phenylenediamine + anthranilate + 2 NAD(+) = 2-(4-dimethylaminophenyl)diazenylbenzoate + 2 NADH + 2 H(+). Its function is as follows. Quinone reductase that provides resistance to thiol-specific stress caused by electrophilic quinones. Also exhibits azoreductase activity. Catalyzes the reductive cleavage of the azo bond in aromatic azo compounds to the corresponding amines. The protein is FMN-dependent NADH:quinone oxidoreductase of Opitutus terrae (strain DSM 11246 / JCM 15787 / PB90-1).